The sequence spans 1141 residues: MESAFTKEHSWSIISSFFEQKGLVRQQLDSFDQFVKTKMQEVINESPVIIVQSAPTAGIETQKRIAVRFGQIYVSKPPVYTESDGRTITVFPNEARIRDLTYASPLFIDVTKETLSELGVVDKHKYSRVPFGSLPVMLRSSYCVLYGLGDKDLIDLGECPYDQGGYFIVNGSEKVIVAQERMASNTVYVFKKAQPATYTHYAEIRSVPEKSSRNPSTLSMKLCRSPGVIRVSLPLVKQDVPLFVLYRALGFLSDKEIIDHILYEDDEEMFELLKESIEEGTVVQDQNVALDYIGKRSAPIGTPQEKRIVMAKDLLAKEVLPHIGTQEFCETKKAYFIGYIVQRLLLVALGRRNPDDRDHYGKKRMDLSGPLLASLFRTLFKKLCVDTTRHMQKCIENGREFNIALGLKASIITQGFRYALATGNWGDQAKAMQTRAGVAQVLNRYNFVSTLSHLRRVNTPIEKEGKLAAPRQLHNTHWGMVCPAETPEGQACGLVKNLSLMAYISVGSSSGPLVEFLEECGVESLEEISTSQLDAATKIFVNGVWVGIHSDPVGLIKSLKLLRRSLEMDKEVSIVRDIREKEIRVQSDAGRPCRPLLVVKDNKLVITAEDIRKLKRGEIKWDNLVTSGFIEFLDVEEEEMSMIAMNTKILADESRNSSDVSVSYTHCEIHPALILGICASTIPFPDHNQSPRNTYQSAMGKQAMGIYATNFLLRMDTLSNILFYPQKPLVTTKSMEYLRFKELPSGQNALVAIACYSGYNQEDSIIMNQSAIDRGLFRSFFYRTYTDQESMSRPGVNEEFCKPSRGAVLRMKNLNYNKLDDDGLISPGTRVTGDDVLIGKITPILDPERSTKEAPVYVYKDSSTAMRRTETGIVDTVIVTNKDGYKFSKVKVRSGRIPQMGDKFASRHAQKGTIGITLRQEDMPFTSEGIVPDIIINPHAIPSRMTIGHLIECLLGKVSAMSGEEGDATPFSGVTVDGISSRLKSYGFQQRGLEVMYNGMTGRKLRAQMFFGPTYYQRLKHMVDDKIHARARGPLQILTRQPVEGRSRDGGLRFGEMERDCIISHGASAFLKERLMDVSDAYSCYVCDFCGLLAMGGSKVNECKGCNNTTNVSMVEIPYAFKLLIQELMGMNIAPRIRFEE.

Aspartate 763 contacts Mg(2+). Zn(2+) is bound by residues cysteine 1087, cysteine 1090, cysteine 1103, and cysteine 1106. A C4-type zinc finger spans residues 1087-1106 (CDFCGLLAMGGSKVNECKGC).

The protein belongs to the RNA polymerase beta chain family. Component of the RNA polymerase II (Pol II) complex consisting of 12 subunits.

It is found in the nucleus. It carries out the reaction RNA(n) + a ribonucleoside 5'-triphosphate = RNA(n+1) + diphosphate. In terms of biological role, DNA-dependent RNA polymerase catalyzes the transcription of DNA into RNA using the four ribonucleoside triphosphates as substrates. Second largest component of RNA polymerase II which synthesizes mRNA precursors and many functional non-coding RNAs. Proposed to contribute to the polymerase catalytic activity and forms the polymerase active center together with the largest subunit. Pol II is the central component of the basal RNA polymerase II transcription machinery. It is composed of mobile elements that move relative to each other. RPB2 is part of the core element with the central large cleft, the clamp element that moves to open and close the cleft and the jaws that are thought to grab the incoming DNA template. This chain is DNA-directed RNA polymerase II subunit RPB2 (RPB2), found in Encephalitozoon cuniculi (strain GB-M1) (Microsporidian parasite).